We begin with the raw amino-acid sequence, 273 residues long: Dermonecrotic toxin LspaSicTox-alphaIA1iii (273 aa).

H5 is a catalytic residue. Mg(2+) contacts are provided by E25 and D27. The active-site Nucleophile is the H41. Cystine bridges form between C45–C51 and C47–C190. D85 is a binding site for Mg(2+).

The protein belongs to the arthropod phospholipase D family. Class II subfamily. Mg(2+) is required as a cofactor. In terms of tissue distribution, expressed by the venom gland.

It is found in the secreted. The catalysed reaction is an N-(acyl)-sphingosylphosphocholine = an N-(acyl)-sphingosyl-1,3-cyclic phosphate + choline. The enzyme catalyses an N-(acyl)-sphingosylphosphoethanolamine = an N-(acyl)-sphingosyl-1,3-cyclic phosphate + ethanolamine. It carries out the reaction a 1-acyl-sn-glycero-3-phosphocholine = a 1-acyl-sn-glycero-2,3-cyclic phosphate + choline. It catalyses the reaction a 1-acyl-sn-glycero-3-phosphoethanolamine = a 1-acyl-sn-glycero-2,3-cyclic phosphate + ethanolamine. Its function is as follows. Dermonecrotic toxins cleave the phosphodiester linkage between the phosphate and headgroup of certain phospholipids (sphingolipid and lysolipid substrates), forming an alcohol (often choline) and a cyclic phosphate. This toxin acts on sphingomyelin (SM). It may also act on ceramide phosphoethanolamine (CPE), lysophosphatidylcholine (LPC) and lysophosphatidylethanolamine (LPE), but not on lysophosphatidylserine (LPS), and lysophosphatidylglycerol (LPG). It acts by transphosphatidylation, releasing exclusively cyclic phosphate products as second products. Induces dermonecrosis, hemolysis, increased vascular permeability, edema, inflammatory response, and platelet aggregation. In Loxosceles spadicea (Recluse spider), this protein is Dermonecrotic toxin LspaSicTox-alphaIA1iii.